We begin with the raw amino-acid sequence, 791 residues long: MQIEEIQNYPANLPVLVEDELFLYPFMITPIFINDSSNMKALDLAIKNDSMLFVAPSKLENGRNFDEIYNCGVIGTIMRKVPLPDGRVKILFQGYAKGKIIEQISNKPLEAKIELIKEDFLEGTKKEALLEVLKEKVKNLANISHYFSPDLLRTIEEGFDASRICDLILNTVRIKKQVAYEFFVLTDLEQKLVKLIDLIAQEIEANKIQKEIKNKVHSRIDKVNKEYFLKEQLRQIQKELGSDTQKEDEVREYQKRLELKKKFMHEDAYKEIKKQIEKFERIHQDNSEASMIQTYIETALDIPFEKISKKKLDIKEVSKQLNHDHYALNKPKERIEEYFAVRELLEKRKIAEKDGAKVILCLYGPPGVGKTSLANSVSKALKRELIRIALGGLEDVNELRGHRRTYIGAMPGRITQGLIEAKQINPVIVLDEIDKLNRSFRGDPSAVLLEILDPEQNSKFRDYYLNFNIDLSKVIFIATANDISNIPAPLRDRMEFIELSSYTPSEKFHIMKKYLIPDELKKHGLKSNELSIDDETIELIISDYTRESGVRNLRRKVAELCRKSAKKLLLENIKKVIINTKNLNEFLDKKVFEIEKNNGENQVGQVNGLAWTSVGGDVLKVEAVKIKGKGELTLTGSLGDVMKESARIAFSMIKVLIDEGKIKIPKKIIIDPKVNVYDSYNIHIHVPDGATPKDGPSAGITISTAIASIFSDKKVKADVAMTGEIDLKGKVLPIGGLKEKLIAAYKADIKTALIPRKNYERDLKDIPSEVRDNMEIIAVDTFSDVLEYTLV.

A Lon N-terminal domain is found at 13–203 (LPVLVEDELF…KLIDLIAQEI (191 aa)). An ATP-binding site is contributed by 364-371 (GPPGVGKT). In terms of domain architecture, Lon proteolytic spans 600–791 (ENQVGQVNGL…FSDVLEYTLV (192 aa)). Residues S697 and K740 contribute to the active site.

The protein belongs to the peptidase S16 family. As to quaternary structure, homohexamer. Organized in a ring with a central cavity.

The protein localises to the cytoplasm. It catalyses the reaction Hydrolysis of proteins in presence of ATP.. In terms of biological role, ATP-dependent serine protease that mediates the selective degradation of mutant and abnormal proteins as well as certain short-lived regulatory proteins. Required for cellular homeostasis and for survival from DNA damage and developmental changes induced by stress. Degrades polypeptides processively to yield small peptide fragments that are 5 to 10 amino acids long. Binds to DNA in a double-stranded, site-specific manner. The sequence is that of Lon protease from Campylobacter jejuni subsp. jejuni serotype O:2 (strain ATCC 700819 / NCTC 11168).